We begin with the raw amino-acid sequence, 1103 residues long: Trophozoite exported protein 1 (1103 aa).

A coiled-coil region spans residues 173 to 212 (KKEKIEDKKYEQDDEEENEEEEEEEEEEEGEEENKEDEEF). Disordered regions lie at residues 178–210 (EDKK…KEDE) and 271–301 (KSYS…DNGK). Positions 184 to 210 (QDDEEENEEEEEEEEEEEGEEENKEDE) are enriched in acidic residues. A compositionally biased stretch (basic and acidic residues) spans 271–280 (KSYSGDEKIN). Coiled-coil stretches lie at residues 304-330 (DYVK…LECN) and 478-518 (YKNY…KLNN). The interval 544-601 (YFDEGENPYNRNNKNYRTDNKNSDDNNNNNNYYYNNYNSDDNYNSEDNEYNNGNYRFR) is disordered. The span at 568 to 585 (DNNNNNNYYYNNYNSDDN) shows a compositional bias: low complexity. 3 coiled-coil regions span residues 650–791 (FRNL…LSGI), 819–932 (DEKY…IYKK), and 993–1030 (NKKL…NLSK). An RING-type zinc finger spans residues 1050-1089 (CSVCMENFRNYIIIKCGHIYCNNCIFNNLKTRNRKCPQCK).

The protein resides in the host cell membrane. The protein is Trophozoite exported protein 1 of Plasmodium falciparum (isolate 3D7).